Here is an 842-residue protein sequence, read N- to C-terminus: Glucans biosynthesis glucosyltransferase H (842 aa).

A run of 7 helical transmembrane segments spans residues isoleucine 140–leucine 160, isoleucine 194–methionine 214, valine 513–leucine 533, isoleucine 568–leucine 588, valine 615–glycine 635, phenylalanine 656–leucine 676, and phenylalanine 680–isoleucine 700.

Belongs to the glycosyltransferase 2 family. OpgH subfamily.

It is found in the cell inner membrane. It participates in glycan metabolism; osmoregulated periplasmic glucan (OPG) biosynthesis. Involved in the biosynthesis of osmoregulated periplasmic glucans (OPGs). This chain is Glucans biosynthesis glucosyltransferase H, found in Klebsiella pneumoniae subsp. pneumoniae (strain ATCC 700721 / MGH 78578).